We begin with the raw amino-acid sequence, 313 residues long: Methionyl-tRNA formyltransferase (313 aa).

Positions 32-51 (QPDRRKGRGKELQPPPAKRK) are disordered. 109–112 (SLLP) serves as a coordination point for (6S)-5,6,7,8-tetrahydrofolate.

It belongs to the Fmt family.

It catalyses the reaction L-methionyl-tRNA(fMet) + (6R)-10-formyltetrahydrofolate = N-formyl-L-methionyl-tRNA(fMet) + (6S)-5,6,7,8-tetrahydrofolate + H(+). Functionally, attaches a formyl group to the free amino group of methionyl-tRNA(fMet). The formyl group appears to play a dual role in the initiator identity of N-formylmethionyl-tRNA by promoting its recognition by IF2 and preventing the misappropriation of this tRNA by the elongation apparatus. This is Methionyl-tRNA formyltransferase from Natranaerobius thermophilus (strain ATCC BAA-1301 / DSM 18059 / JW/NM-WN-LF).